The chain runs to 210 residues: MYALVTLAWWDFRTVRPRIGAMPIDFLQPAEIVAPQLLGCTLTHGGVGIRITEVEAYLDSTDEAAHTYRGKTPRNAAMFGPGGHMYVYISYGIHRAGNIVCGPEGTGQGVLLRAGEVVSGESIAQNRRGERIPHARLAQGPGNFGQALGLEVSDNHASVFGPSFLISDGVETPEIVRGPRIGISKNTEALLRFWIPNDPTVSGRRGYPKE.

The protein belongs to the DNA glycosylase MPG family.

The sequence is that of Putative 3-methyladenine DNA glycosylase from Corynebacterium glutamicum (strain R).